Here is a 337-residue protein sequence, read N- to C-terminus: Ketol-acid reductoisomerase (NADP(+)) (337 aa).

The KARI N-terminal Rossmann domain occupies 2-182 (AKIFYDNDAD…GATRAGVLLT (181 aa)). NADP(+) is bound by residues 25 to 28 (YGSQ), Ser51, Ser53, and 83 to 86 (DTSQ). The active site involves His108. Gly134 provides a ligand contact to NADP(+). The region spanning 183–328 (TFAEETETDL…ANLRKMMPFI (146 aa)) is the KARI C-terminal knotted domain. Residues Asp191, Glu195, Glu227, and Glu231 each contribute to the Mg(2+) site. Ser252 is a substrate binding site.

It belongs to the ketol-acid reductoisomerase family. It depends on Mg(2+) as a cofactor.

It catalyses the reaction (2R)-2,3-dihydroxy-3-methylbutanoate + NADP(+) = (2S)-2-acetolactate + NADPH + H(+). The enzyme catalyses (2R,3R)-2,3-dihydroxy-3-methylpentanoate + NADP(+) = (S)-2-ethyl-2-hydroxy-3-oxobutanoate + NADPH + H(+). Its pathway is amino-acid biosynthesis; L-isoleucine biosynthesis; L-isoleucine from 2-oxobutanoate: step 2/4. It functions in the pathway amino-acid biosynthesis; L-valine biosynthesis; L-valine from pyruvate: step 2/4. In terms of biological role, involved in the biosynthesis of branched-chain amino acids (BCAA). Catalyzes an alkyl-migration followed by a ketol-acid reduction of (S)-2-acetolactate (S2AL) to yield (R)-2,3-dihydroxy-isovalerate. In the isomerase reaction, S2AL is rearranged via a Mg-dependent methyl migration to produce 3-hydroxy-3-methyl-2-ketobutyrate (HMKB). In the reductase reaction, this 2-ketoacid undergoes a metal-dependent reduction by NADPH to yield (R)-2,3-dihydroxy-isovalerate. The protein is Ketol-acid reductoisomerase (NADP(+)) of Sorangium cellulosum (strain So ce56) (Polyangium cellulosum (strain So ce56)).